The chain runs to 100 residues: NADH-quinone oxidoreductase subunit K (100 aa).

Helical transmembrane passes span Met-1–Gly-21, Ile-28–Ala-48, and Phe-64–Phe-84.

It belongs to the complex I subunit 4L family. As to quaternary structure, NDH-1 is composed of 14 different subunits. Subunits NuoA, H, J, K, L, M, N constitute the membrane sector of the complex.

It is found in the cell inner membrane. It carries out the reaction a quinone + NADH + 5 H(+)(in) = a quinol + NAD(+) + 4 H(+)(out). Functionally, NDH-1 shuttles electrons from NADH, via FMN and iron-sulfur (Fe-S) centers, to quinones in the respiratory chain. The immediate electron acceptor for the enzyme in this species is believed to be ubiquinone. Couples the redox reaction to proton translocation (for every two electrons transferred, four hydrogen ions are translocated across the cytoplasmic membrane), and thus conserves the redox energy in a proton gradient. This Helicobacter pylori (strain Shi470) protein is NADH-quinone oxidoreductase subunit K.